A 275-amino-acid chain; its full sequence is Large ribosomal subunit protein uL2 (275 aa).

The disordered stretch occupies residues 223–260; sequence VAMNPVDHPHGGGEGRTSGGRHPVSPWGLPTKGYKTRS.

This sequence belongs to the universal ribosomal protein uL2 family. In terms of assembly, part of the 50S ribosomal subunit. Forms a bridge to the 30S subunit in the 70S ribosome.

One of the primary rRNA binding proteins. Required for association of the 30S and 50S subunits to form the 70S ribosome, for tRNA binding and peptide bond formation. It has been suggested to have peptidyltransferase activity; this is somewhat controversial. Makes several contacts with the 16S rRNA in the 70S ribosome. This Legionella pneumophila (strain Lens) protein is Large ribosomal subunit protein uL2.